Here is a 238-residue protein sequence, read N- to C-terminus: 7-carboxy-7-deazaguanine synthase (238 aa).

Substrate is bound by residues 14-16 and Arg-29; that span reads IQG. In terms of domain architecture, Radical SAM core spans 20-234; the sequence is VVGQKTMFIR…PQLHALVWGN (215 aa). Residues Cys-33, Cys-37, and Cys-40 each contribute to the [4Fe-4S] cluster site. Ser-42 lines the Mg(2+) pocket. A substrate-binding site is contributed by Ser-80. S-adenosyl-L-methionine-binding positions include Gly-82 and 126–128; that span reads SPK.

This sequence belongs to the radical SAM superfamily. 7-carboxy-7-deazaguanine synthase family. Homodimer. [4Fe-4S] cluster is required as a cofactor. It depends on S-adenosyl-L-methionine as a cofactor. Mg(2+) serves as cofactor.

It catalyses the reaction 6-carboxy-5,6,7,8-tetrahydropterin + H(+) = 7-carboxy-7-deazaguanine + NH4(+). Its pathway is purine metabolism; 7-cyano-7-deazaguanine biosynthesis. Catalyzes the complex heterocyclic radical-mediated conversion of 6-carboxy-5,6,7,8-tetrahydropterin (CPH4) to 7-carboxy-7-deazaguanine (CDG), a step common to the biosynthetic pathways of all 7-deazapurine-containing compounds. This Bacillus cereus (strain ATCC 14579 / DSM 31 / CCUG 7414 / JCM 2152 / NBRC 15305 / NCIMB 9373 / NCTC 2599 / NRRL B-3711) protein is 7-carboxy-7-deazaguanine synthase.